A 111-amino-acid polypeptide reads, in one-letter code: MSWRGRSTYRPRPRRSLQPPELIGAMLEPTDEEPKEEKPPTKSRNPTPDQKREDDQGAAEIQVPDLEADLQELCQTKTGDGCEGGTDVKGKILPKAEHFKMPEAGEGKSQV.

Disordered stretches follow at residues 1–61 (MSWR…AAEI) and 77–111 (KTGD…KSQV). Basic and acidic residues predominate over residues 86–111 (TDVKGKILPKAEHFKMPEAGEGKSQV).

The protein belongs to the GAGE family.

This is X antigen family member 2 (XAGE2) from Homo sapiens (Human).